The following is a 373-amino-acid chain: GTP cyclohydrolase 1 type 2 homolog (373 aa).

5 residues coordinate a divalent metal cation: H68, H69, D107, H333, and E336.

It belongs to the GTP cyclohydrolase I type 2/NIF3 family. Homohexamer.

The chain is GTP cyclohydrolase 1 type 2 homolog (yqfO) from Bacillus subtilis (strain 168).